The sequence spans 415 residues: MASAFSPATAAPAASPALFSASTSRPLSLTAAAAAVSARIPSRRGFRRGRFTVCNVAAPSATQQEAKAAGAKESQRPVYPFAAIVGQDEMKLCLLLNVIDPKIGGVMIMGDRGTGKSTTVRSLVDLLPDIRVVVGDPFNSDPDDPEVMGPEVRERVLEGEKLPVVTAKITMVDLPLGATEDRVCGTIDIEKALTDGVKAFEPGLLAKANRGILYVDEVNLLDDHLVDVLLDSAASGWNTVEREGISISHPARFILIGSGNPEEGELRPQLLDRFGMHAQVGTVRDAELRVKIVEERARFDRDPKAFRESYLEEQDKLQQQISSARSNLGAVQIDHDLRVKISKVCAELNVDGLRGDIVTNRAAKALAALKGRDTVTVEDIATVIPNCLRHRLRKDPLESIDSGLLVVEKFYEVFT.

The N-terminal 67 residues, 1 to 67, are a transit peptide targeting the chloroplast; it reads MASAFSPATA…APSATQQEAK (67 aa). Cystine bridges form between Cys-93-Cys-184 and Cys-345-Cys-387.

It belongs to the Mg-chelatase subunits D/I family. In terms of assembly, the magnesium chelatase complex is a heterotrimer consisting of subunits CHLI, CHLD and CHLH.

The protein resides in the plastid. It localises to the chloroplast. It carries out the reaction protoporphyrin IX + Mg(2+) + ATP + H2O = Mg-protoporphyrin IX + ADP + phosphate + 3 H(+). Its pathway is porphyrin-containing compound metabolism; chlorophyll biosynthesis. Its activity is regulated as follows. Redox regulation; active in reducing conditions, inactive in oxidizing conditions. Thioredoxins f and m mediate the reversible reductive activation of oxidized CHLI. Its function is as follows. Involved in chlorophyll biosynthesis. Catalyzes the insertion of magnesium ion into protoporphyrin IX to yield Mg-protoporphyrin IX. The reaction takes place in two steps, with an ATP-dependent activation followed by an ATP-dependent chelation step. This Oryza sativa subsp. japonica (Rice) protein is Magnesium-chelatase subunit ChlI, chloroplastic (CHLI).